Reading from the N-terminus, the 78-residue chain is MAKAPSPLVFPIIFLIIFALVEPNMGCIQIIGRCIKIPDCSASCRKFLGPHASGYCDNDGAGGTCICTYPCQTKEIHM.

An N-terminal signal peptide occupies residues methionine 1–proline 23. Disulfide bonds link cysteine 27–cysteine 71, cysteine 34–cysteine 56, cysteine 40–cysteine 65, and cysteine 44–cysteine 67.

The protein belongs to the DEFL family.

It is found in the secreted. In Arabidopsis thaliana (Mouse-ear cress), this protein is Defensin-like protein 173 (LCR63).